The following is a 538-amino-acid chain: Mitochondria-eating protein (538 aa).

The interaction with YWHAG/14-3-3 protein gamma stretch occupies residues 1 to 273 (MAENLKRLVS…PRSRSCSRSR (273 aa)). Ser85 is modified (phosphoserine). A disordered region spans residues 92 to 137 (GKPVDSKVPSLQNTFDRERRKDPSPRDRDMQQLDSNLNSTRSQLNQ). Residues 106 to 122 (FDRERRKDPSPRDRDMQ) show a composition bias toward basic and acidic residues. 2 coiled-coil regions span residues 118 to 186 (DRDM…ARHR) and 220 to 256 (QRDT…RSSR). Over residues 123-137 (QLDSNLNSTRSQLNQ) the composition is skewed to polar residues. Ser156 and Ser159 each carry phosphoserine. Disordered regions lie at residues 174–227 (LKTL…EVTS) and 247–292 (KSAL…NRSK). Composition is skewed to basic and acidic residues over residues 181–209 (EDAR…RRCE) and 216–227 (RNADQRDTEVTS). Low complexity predominate over residues 253–278 (RSSRSRSPSPAPRSRSCSRSRSASPS). Phosphoserine occurs at positions 285, 287, and 509.

Belongs to the MIEAP family. In terms of assembly, interacts (via coiled-coil domains) with BNIP3L (via BH3 domain). Interacts (via coiled-coil domains) with BNIP3 (via BH3 domain). Interacts with YWHAG/14-3-3 protein gamma; a protein that also plays a role in MALM.

The protein resides in the cytoplasm. The protein localises to the cytosol. It localises to the mitochondrion outer membrane. Its subcellular location is the mitochondrion matrix. In terms of biological role, key regulator of mitochondrial quality that mediates the repairing or degradation of unhealthy mitochondria in response to mitochondrial damage. Mediator of mitochondrial protein catabolic process (also named MALM) by mediating the degradation of damaged proteins inside mitochondria by promoting the accumulation in the mitochondrial matrix of hydrolases that are characteristic of the lysosomal lumen. Also involved in mitochondrion degradation of damaged mitochondria by promoting the formation of vacuole-like structures (named MIV), which engulf and degrade unhealthy mitochondria by accumulating lysosomes. The physical interaction of SPATA18/MIEAP, BNIP3 and BNIP3L/NIX at the mitochondrial outer membrane regulates the opening of a pore in the mitochondrial double membrane in order to mediate the translocation of lysosomal proteins from the cytoplasm to the mitochondrial matrix. Binds cardiolipin. May form molecular condensates (non-membrane-bounded organelles) within mitochondria that compartmentalize and promote cardiolipin metabolism. This Macaca fascicularis (Crab-eating macaque) protein is Mitochondria-eating protein (SPATA18).